We begin with the raw amino-acid sequence, 324 residues long: Glutathione synthetase (324 aa).

Positions 124-309 (KLAIAQFREF…VAGMFIDALE (186 aa)) constitute an ATP-grasp domain. 150–206 (HAEQGDVIFKPLDGMGGAGIFRVGADGMNLGSVIETLTHNGTRTVMAQQYIPAIRDG) provides a ligand contact to ATP. The Mg(2+) site is built by Glu-280 and Asn-282.

Belongs to the prokaryotic GSH synthase family. The cofactor is Mg(2+). Requires Mn(2+) as cofactor.

It carries out the reaction gamma-L-glutamyl-L-cysteine + glycine + ATP = glutathione + ADP + phosphate + H(+). It functions in the pathway sulfur metabolism; glutathione biosynthesis; glutathione from L-cysteine and L-glutamate: step 2/2. The polypeptide is Glutathione synthetase (Ralstonia nicotianae (strain ATCC BAA-1114 / GMI1000) (Ralstonia solanacearum)).